The primary structure comprises 450 residues: Tubulin beta-3 chain (450 aa).

Residues 1–4 carry the MREI motif motif; it reads MREI. The GTP site is built by glutamine 11, glutamate 69, serine 138, glycine 142, threonine 143, and glycine 144. Residue glutamate 69 coordinates Mg(2+). At serine 172 the chain carries Phosphoserine; by CDK1. Residues asparagine 204 and asparagine 226 each coordinate GTP. The interval 422–450 is disordered; sequence YQQYQDATAEEEGEMYEDDDEESEAQGPK. Positions 429 to 450 are enriched in acidic residues; sequence TAEEEGEMYEDDDEESEAQGPK. Residue glutamate 438 is modified to 5-glutamyl polyglutamate. Phosphoserine is present on serine 444.

Belongs to the tubulin family. In terms of assembly, heterodimer of alpha- and beta-tubulin. A typical microtubule is a hollow water-filled tube with an outer diameter of 25 nm and an inner diameter of 15 nM. Alpha-beta heterodimers associate head-to-tail to form protofilaments running lengthwise along the microtubule wall with the beta-tubulin subunit facing the microtubule plus end conferring a structural polarity. Microtubules usually have 13 protofilaments but different protofilament numbers can be found in some organisms and specialized cells. Interacts with gamma-tubulin; the interaction allows microtubules to nucleate from the gamma-tubulin ring complex (gTuRC). Interacts with UNC5C (via cytoplasmic domain); this interaction is decreased by NTN1/Netrin-1. Interacts with NLRP5/MATER at cytoskeleton microtubules. Interacts with DPYSL5. Interacts with CFAP61. Requires Mg(2+) as cofactor. Some glutamate residues at the C-terminus are polyglycylated, resulting in polyglycine chains on the gamma-carboxyl group. Glycylation is mainly limited to tubulin incorporated into axonemes (cilia and flagella) whereas glutamylation is prevalent in neuronal cells, centrioles, axonemes, and the mitotic spindle. Both modifications can coexist on the same protein on adjacent residues, and lowering polyglycylation levels increases polyglutamylation, and reciprocally. Cilia and flagella glycylation is required for their stability and maintenance. Flagella glycylation controls sperm motility. In terms of processing, some glutamate residues at the C-terminus are polyglutamylated, resulting in polyglutamate chains on the gamma-carboxyl group. Polyglutamylation plays a key role in microtubule severing by spastin (SPAST). SPAST preferentially recognizes and acts on microtubules decorated with short polyglutamate tails: severing activity by SPAST increases as the number of glutamates per tubulin rises from one to eight, but decreases beyond this glutamylation threshold. Glutamylation is also involved in cilia motility. Post-translationally, phosphorylated on Ser-172 by CDK1 during the cell cycle, from metaphase to telophase, but not in interphase. This phosphorylation inhibits tubulin incorporation into microtubules.

The protein resides in the cytoplasm. The protein localises to the cytoskeleton. It localises to the cell projection. It is found in the growth cone. Its subcellular location is the lamellipodium. The protein resides in the filopodium. Its function is as follows. Tubulin is the major constituent of microtubules, protein filaments consisting of alpha- and beta-tubulin heterodimers. Microtubules grow by the addition of GTP-tubulin dimers to the microtubule end, where a stabilizing cap forms. Below the cap, alpha-beta tubulin heterodimers are in GDP-bound state, owing to GTPase activity of alpha-tubulin. TUBB3 plays a critical role in proper axon guidance and maintenance. Binding of NTN1/Netrin-1 to its receptor UNC5C might cause dissociation of UNC5C from polymerized TUBB3 in microtubules and thereby lead to increased microtubule dynamics and axon repulsion. Plays a role in dorsal root ganglion axon projection towards the spinal cord. The chain is Tubulin beta-3 chain (Tubb3) from Rattus norvegicus (Rat).